The sequence spans 419 residues: Ubiquitin-like modifier-activating enzyme 5 (419 aa).

Residues 18-47 are disordered; that stretch reads NRLGNVKKDHPLESSSNSKPTHQPKSPAPY. Positions 30–41 are enriched in polar residues; sequence ESSSNSKPTHQP. ATP contacts are provided by Gly94, Asp115, Lys138, Asn161, and Asn194. Positions 236 and 239 each coordinate Zn(2+). Cys260 functions as the Glycyl thioester intermediate in the catalytic mechanism. Zn(2+) contacts are provided by Cys313 and Cys318.

It belongs to the ubiquitin-activating E1 family. UBA5 subfamily. As to quaternary structure, interacts with ufc-1. As to expression, expressed in the intestine.

E1-like enzyme which activates ufm-1. Required for interaction between ufm-1 and ufc-1. The sequence is that of Ubiquitin-like modifier-activating enzyme 5 from Caenorhabditis elegans.